The chain runs to 342 residues: Nucleoid-associated protein Shewana3_2426 (342 aa).

Belongs to the YejK family.

It localises to the cytoplasm. It is found in the nucleoid. The chain is Nucleoid-associated protein Shewana3_2426 from Shewanella sp. (strain ANA-3).